A 228-amino-acid polypeptide reads, in one-letter code: 7-cyano-7-deazaguanine synthase (228 aa).

An ATP-binding site is contributed by 13–23 (LSGGMDSTLSS). Positions 192, 200, 203, and 206 each coordinate Zn(2+).

This sequence belongs to the QueC family. Requires Zn(2+) as cofactor.

It carries out the reaction 7-carboxy-7-deazaguanine + NH4(+) + ATP = 7-cyano-7-deazaguanine + ADP + phosphate + H2O + H(+). It functions in the pathway purine metabolism; 7-cyano-7-deazaguanine biosynthesis. Its function is as follows. Catalyzes the ATP-dependent conversion of 7-carboxy-7-deazaguanine (CDG) to 7-cyano-7-deazaguanine (preQ(0)). The sequence is that of 7-cyano-7-deazaguanine synthase from Aliarcobacter butzleri (strain RM4018) (Arcobacter butzleri).